An 83-amino-acid chain; its full sequence is Conotoxin VnMKLT1-022 (83 aa).

Residues 1 to 22 form the signal peptide; it reads MKLMCMMIVAVLFLTAWTFVTA. The propeptide occupies 23–55; it reads DDSINGPENRRIWEKLLSKTRDEMKNPEASKLN. Disulfide bonds link C59–C74, C66–C78, and C73–C82.

The protein belongs to the conotoxin O1 superfamily. In terms of tissue distribution, expressed by the venom duct.

It localises to the secreted. The protein is Conotoxin VnMKLT1-022 of Conus ventricosus (Mediterranean cone).